A 110-amino-acid polypeptide reads, in one-letter code: MEVAAKLSGARISAQKARLVADQIRGKKVGEALNLLAFSSKKAAEIMKKVLESAVANAEHNEGADVDDLKVSTVFVNEGRSLKRIMPRAKGRADRIVKRSCHITVKVADK.

The protein belongs to the universal ribosomal protein uL22 family. As to quaternary structure, part of the 50S ribosomal subunit.

This protein binds specifically to 23S rRNA; its binding is stimulated by other ribosomal proteins, e.g. L4, L17, and L20. It is important during the early stages of 50S assembly. It makes multiple contacts with different domains of the 23S rRNA in the assembled 50S subunit and ribosome. Functionally, the globular domain of the protein is located near the polypeptide exit tunnel on the outside of the subunit, while an extended beta-hairpin is found that lines the wall of the exit tunnel in the center of the 70S ribosome. This is Large ribosomal subunit protein uL22 from Pseudomonas aeruginosa (strain LESB58).